Here is a 551-residue protein sequence, read N- to C-terminus: Frizzled-2 (551 aa).

The signal sequence occupies residues 1–26 (MQGVTRASILLIIYHLFTLSLGQLHG). At 27–231 (EKGISVPEHG…FSQDEIRFAR (205 aa)) the chain is on the extracellular side. In terms of domain architecture, FZ spans 33 to 152 (PEHGFCQPIS…HGAEQICVGQ (120 aa)). 5 disulfide bridges follow: C38-C99, C46-C92, C83-C120, C109-C149, and C113-C137. N-linked (GlcNAc...) asparagine glycosylation occurs at N52. An N-linked (GlcNAc...) asparagine glycan is attached at N153. Residues 232–252 (IWILIWSVLCCASTFITVTTY) form a helical membrane-spanning segment. Residues 253 to 265 (LVDMQRFRYPERP) are Cytoplasmic-facing. The chain crosses the membrane as a helical span at residues 266-286 (IIFLSGCYTMVSVAYIAGFVL). Topologically, residues 287-313 (GDKVVCNEGFSEDGYKTVVQGTKKEGC) are extracellular. The helical transmembrane segment at 314–334 (TILFMMLYFFSMASSIWWVIL) threads the bilayer. Over 335–356 (SLTWFLAAGMKWGHEAIEANSQ) the chain is Cytoplasmic. A helical membrane pass occupies residues 357–377 (YFHLAAWAVPAVKTITILAMG). The Extracellular segment spans residues 378 to 400 (QIDGDLLSGVCFVGLNNIDPLRG). Residues 401–421 (FVLAPLFVYLFIGTSFLLAGF) traverse the membrane as a helical segment. Topologically, residues 422 to 447 (VSLFRIRTIMKHDGTKTEKLERLMVR) are cytoplasmic. The chain crosses the membrane as a helical span at residues 448–468 (IGVFSVLYTVPATIVIACYFY). The Extracellular portion of the chain corresponds to 469 to 505 (EQAFREHWERSWVSQNCKSLAIPCPLQYTPRMTPDFT). A helical membrane pass occupies residues 506-526 (VYMIKYLMTLIVGITSGFWIW). Residues 527 to 534 (SGKTLHSW) lie on the Cytoplasmic side of the membrane. Residues 529 to 534 (KTLHSW) carry the Lys-Thr-X-X-X-Trp motif, mediates interaction with the PDZ domain of Dvl family members motif. The PDZ-binding motif lies at 549–551 (TTV).

Belongs to the G-protein coupled receptor Fz/Smo family. In terms of tissue distribution, widely expressed, especially in the eye anlage, otic vesicle and developing somites.

The protein localises to the membrane. It is found in the cell membrane. In terms of biological role, receptor for Wnt proteins. Most of frizzled receptors are coupled to the beta-catenin canonical signaling pathway, which leads to the activation of disheveled proteins, inhibition of GSK-3 kinase, nuclear accumulation of beta-catenin and activation of Wnt target genes. A second signaling pathway involving PKC and calcium fluxes has been seen for some family members, but it is not yet clear if it represents a distinct pathway or if it can be integrated in the canonical pathway, as PKC seems to be required for Wnt-mediated inactivation of GSK-3 kinase. Both pathways seem to involve interactions with G-proteins. May be involved in transduction and intercellular transmission of polarity information during tissue morphogenesis and/or in differentiated tissues. This Xenopus laevis (African clawed frog) protein is Frizzled-2 (fzd2).